Consider the following 160-residue polypeptide: Ribosomal RNA large subunit methyltransferase H (160 aa).

S-adenosyl-L-methionine contacts are provided by residues leucine 76, glycine 108, and phenylalanine 127–tryptophan 132.

Belongs to the RNA methyltransferase RlmH family. In terms of assembly, homodimer.

The protein localises to the cytoplasm. It carries out the reaction pseudouridine(1915) in 23S rRNA + S-adenosyl-L-methionine = N(3)-methylpseudouridine(1915) in 23S rRNA + S-adenosyl-L-homocysteine + H(+). Its function is as follows. Specifically methylates the pseudouridine at position 1915 (m3Psi1915) in 23S rRNA. The chain is Ribosomal RNA large subunit methyltransferase H from Bartonella henselae (strain ATCC 49882 / DSM 28221 / CCUG 30454 / Houston 1) (Rochalimaea henselae).